The following is a 226-amino-acid chain: Leucyl/phenylalanyl-tRNA--protein transferase (226 aa).

The protein belongs to the L/F-transferase family.

Its subcellular location is the cytoplasm. The enzyme catalyses N-terminal L-lysyl-[protein] + L-leucyl-tRNA(Leu) = N-terminal L-leucyl-L-lysyl-[protein] + tRNA(Leu) + H(+). It catalyses the reaction N-terminal L-arginyl-[protein] + L-leucyl-tRNA(Leu) = N-terminal L-leucyl-L-arginyl-[protein] + tRNA(Leu) + H(+). It carries out the reaction L-phenylalanyl-tRNA(Phe) + an N-terminal L-alpha-aminoacyl-[protein] = an N-terminal L-phenylalanyl-L-alpha-aminoacyl-[protein] + tRNA(Phe). In terms of biological role, functions in the N-end rule pathway of protein degradation where it conjugates Leu, Phe and, less efficiently, Met from aminoacyl-tRNAs to the N-termini of proteins containing an N-terminal arginine or lysine. The sequence is that of Leucyl/phenylalanyl-tRNA--protein transferase from Azotobacter vinelandii (strain DJ / ATCC BAA-1303).